The sequence spans 30 residues: Cyclotide cter-F (30 aa).

Residues 1 to 30 (GIPCGESCVFIPCISSVVGCSCKSKVCYLD) constitute a cross-link (cyclopeptide (Gly-Asp)). Cystine bridges form between Cys4–Cys20, Cys8–Cys22, and Cys13–Cys27.

Post-translationally, contains 3 disulfide bonds. In terms of processing, this is a cyclic peptide.

Probably participates in a plant defense mechanism. The sequence is that of Cyclotide cter-F from Clitoria ternatea (Butterfly pea).